We begin with the raw amino-acid sequence, 690 residues long: DNA ligase (690 aa).

NAD(+) contacts are provided by residues 36–40, 85–86, and Glu-124; these read DAVYD and SL. The N6-AMP-lysine intermediate role is filled by Lys-126. 4 residues coordinate NAD(+): Arg-147, Glu-184, Lys-308, and Lys-332. Residues Cys-426, Cys-429, Cys-444, and Cys-449 each coordinate Zn(2+). Residues 614–690 form the BRCT domain; that stretch reads NQSNVFDGKS…INENELKLLL (77 aa).

Belongs to the NAD-dependent DNA ligase family. LigA subfamily. Mg(2+) serves as cofactor. It depends on Mn(2+) as a cofactor.

It catalyses the reaction NAD(+) + (deoxyribonucleotide)n-3'-hydroxyl + 5'-phospho-(deoxyribonucleotide)m = (deoxyribonucleotide)n+m + AMP + beta-nicotinamide D-nucleotide.. In terms of biological role, DNA ligase that catalyzes the formation of phosphodiester linkages between 5'-phosphoryl and 3'-hydroxyl groups in double-stranded DNA using NAD as a coenzyme and as the energy source for the reaction. It is essential for DNA replication and repair of damaged DNA. The sequence is that of DNA ligase from Prochlorococcus marinus (strain NATL1A).